Reading from the N-terminus, the 257-residue chain is uncharacterized protein (257 aa).

A signal peptide spans 1 to 22 (MIHSKRLRLWLYLVLLAVFIGA). Residue cysteine 23 is the site of N-palmitoyl cysteine attachment. The S-diacylglycerol cysteine moiety is linked to residue cysteine 23.

Belongs to the staphylococcal tandem lipoprotein family.

It is found in the cell membrane. This is an uncharacterized protein from Staphylococcus aureus (strain NCTC 8325 / PS 47).